Reading from the N-terminus, the 376-residue chain is ATP phosphoribosyltransferase regulatory subunit (376 aa).

Belongs to the class-II aminoacyl-tRNA synthetase family. HisZ subfamily. As to quaternary structure, heteromultimer composed of HisG and HisZ subunits.

Its subcellular location is the cytoplasm. The protein operates within amino-acid biosynthesis; L-histidine biosynthesis; L-histidine from 5-phospho-alpha-D-ribose 1-diphosphate: step 1/9. Its function is as follows. Required for the first step of histidine biosynthesis. May allow the feedback regulation of ATP phosphoribosyltransferase activity by histidine. The polypeptide is ATP phosphoribosyltransferase regulatory subunit (Brucella canis (strain ATCC 23365 / NCTC 10854 / RM-666)).